The sequence spans 300 residues: tRNA dimethylallyltransferase (300 aa).

Residue 9 to 16 (GPTASGKT) participates in ATP binding. 11 to 16 (TASGKT) lines the substrate pocket. The segment at 34 to 37 (DSQQ) is interaction with substrate tRNA.

This sequence belongs to the IPP transferase family. In terms of assembly, monomer. Mg(2+) is required as a cofactor.

It carries out the reaction adenosine(37) in tRNA + dimethylallyl diphosphate = N(6)-dimethylallyladenosine(37) in tRNA + diphosphate. Functionally, catalyzes the transfer of a dimethylallyl group onto the adenine at position 37 in tRNAs that read codons beginning with uridine, leading to the formation of N6-(dimethylallyl)adenosine (i(6)A). The polypeptide is tRNA dimethylallyltransferase (Anaeromyxobacter sp. (strain Fw109-5)).